The sequence spans 430 residues: Asparagine--tRNA ligase (430 aa).

Belongs to the class-II aminoacyl-tRNA synthetase family. In terms of assembly, homodimer.

It localises to the cytoplasm. It carries out the reaction tRNA(Asn) + L-asparagine + ATP = L-asparaginyl-tRNA(Asn) + AMP + diphosphate + H(+). This is Asparagine--tRNA ligase from Staphylococcus epidermidis (strain ATCC 35984 / DSM 28319 / BCRC 17069 / CCUG 31568 / BM 3577 / RP62A).